Reading from the N-terminus, the 68-residue chain is MKYLLIKFVRFWQICISPLYPSSCRFYPTCSHYAILSIEKYGAFKGGMKAFWRILRCNPWNKGGIDYP.

The protein belongs to the UPF0161 family.

It is found in the cell inner membrane. Its function is as follows. Could be involved in insertion of integral membrane proteins into the membrane. This is Putative membrane protein insertion efficiency factor from Hydrogenobaculum sp. (strain Y04AAS1).